The following is a 678-amino-acid chain: Glycine--tRNA ligase beta subunit (678 aa).

It belongs to the class-II aminoacyl-tRNA synthetase family. Tetramer of two alpha and two beta subunits.

Its subcellular location is the cytoplasm. It carries out the reaction tRNA(Gly) + glycine + ATP = glycyl-tRNA(Gly) + AMP + diphosphate. The sequence is that of Glycine--tRNA ligase beta subunit from Streptococcus pneumoniae (strain 70585).